A 575-amino-acid chain; its full sequence is Aspartate--tRNA ligase (575 aa).

E169 lines the L-aspartate pocket. Residues 193-196 (QLFK) form an aspartate region. R215 is an L-aspartate binding site. Residues 215 to 217 (RDE) and Q224 each bind ATP. L-aspartate is bound at residue H438. E472 is an ATP binding site. Position 479 (R479) interacts with L-aspartate. 524-527 (GLDR) is a binding site for ATP.

Belongs to the class-II aminoacyl-tRNA synthetase family. Type 1 subfamily. Homodimer.

The protein localises to the cytoplasm. It carries out the reaction tRNA(Asp) + L-aspartate + ATP = L-aspartyl-tRNA(Asp) + AMP + diphosphate. Its function is as follows. Catalyzes the attachment of L-aspartate to tRNA(Asp) in a two-step reaction: L-aspartate is first activated by ATP to form Asp-AMP and then transferred to the acceptor end of tRNA(Asp). This is Aspartate--tRNA ligase from Mycoplasma capricolum subsp. capricolum (strain California kid / ATCC 27343 / NCTC 10154).